Here is a 185-residue protein sequence, read N- to C-terminus: Large ribosomal subunit protein uL10 (185 aa).

The tract at residues 165-185 is disordered; that stretch reads LRAKKEEQGGAGTPAPAEAAE.

It belongs to the universal ribosomal protein uL10 family. In terms of assembly, part of the ribosomal stalk of the 50S ribosomal subunit. The N-terminus interacts with L11 and the large rRNA to form the base of the stalk. The C-terminus forms an elongated spine to which L12 dimers bind in a sequential fashion forming a multimeric L10(L12)X complex.

In terms of biological role, forms part of the ribosomal stalk, playing a central role in the interaction of the ribosome with GTP-bound translation factors. The protein is Large ribosomal subunit protein uL10 of Streptomyces griseus subsp. griseus (strain JCM 4626 / CBS 651.72 / NBRC 13350 / KCC S-0626 / ISP 5235).